The primary structure comprises 379 residues: Cytochrome b (379 aa).

The next 4 helical transmembrane spans lie at 33–53 (FGSLLGACLTIQIITGLFLAM), 77–98 (WTIRYLHANGASMFFLCLFIHV), 113–133 (WNVGIILLFSVMATAFMGYVL), and 178–198 (FFALHFILPFIISALVMIHLL). 2 residues coordinate heme b: histidine 83 and histidine 97. Heme b contacts are provided by histidine 182 and histidine 196. An a ubiquinone-binding site is contributed by histidine 201. 4 consecutive transmembrane segments (helical) span residues 226–246 (TKDFLGLLLLILLLMTTALFY), 288–308 (LGGVLALILSILILMIIPFLQ), 320–340 (LSQFLFWILVADLLTLTWIGG), and 347–367 (FINIGQMASMLYFFLMIFIMP).

Belongs to the cytochrome b family. As to quaternary structure, the cytochrome bc1 complex contains 11 subunits: 3 respiratory subunits (MT-CYB, CYC1 and UQCRFS1), 2 core proteins (UQCRC1 and UQCRC2) and 6 low-molecular weight proteins (UQCRH/QCR6, UQCRB/QCR7, UQCRQ/QCR8, UQCR10/QCR9, UQCR11/QCR10 and a cleavage product of UQCRFS1). This cytochrome bc1 complex then forms a dimer. Heme b is required as a cofactor.

The protein resides in the mitochondrion inner membrane. In terms of biological role, component of the ubiquinol-cytochrome c reductase complex (complex III or cytochrome b-c1 complex) that is part of the mitochondrial respiratory chain. The b-c1 complex mediates electron transfer from ubiquinol to cytochrome c. Contributes to the generation of a proton gradient across the mitochondrial membrane that is then used for ATP synthesis. This Lepilemur ankaranensis (Ankarana sportive lemur) protein is Cytochrome b (MT-CYB).